The sequence spans 332 residues: Ribosomal RNA small subunit methyltransferase H (332 aa).

S-adenosyl-L-methionine-binding positions include 39 to 41 (GGY), D56, F83, D100, and Q107.

This sequence belongs to the methyltransferase superfamily. RsmH family.

It is found in the cytoplasm. It catalyses the reaction cytidine(1402) in 16S rRNA + S-adenosyl-L-methionine = N(4)-methylcytidine(1402) in 16S rRNA + S-adenosyl-L-homocysteine + H(+). Functionally, specifically methylates the N4 position of cytidine in position 1402 (C1402) of 16S rRNA. The polypeptide is Ribosomal RNA small subunit methyltransferase H (Bartonella grahamii (strain as4aup)).